Consider the following 541-residue polypeptide: Chaperonin GroEL 1 (541 aa).

Residues 30–33 (TLGP), 87–91 (DGTTT), G414, 478–480 (NAA), and D494 each bind ATP.

Belongs to the chaperonin (HSP60) family. In terms of assembly, forms a cylinder of 14 subunits composed of two heptameric rings stacked back-to-back. Interacts with the co-chaperonin GroES.

It localises to the cytoplasm. The catalysed reaction is ATP + H2O + a folded polypeptide = ADP + phosphate + an unfolded polypeptide.. In terms of biological role, together with its co-chaperonin GroES, plays an essential role in assisting protein folding. The GroEL-GroES system forms a nano-cage that allows encapsulation of the non-native substrate proteins and provides a physical environment optimized to promote and accelerate protein folding. This is Chaperonin GroEL 1 from Thermobifida fusca (strain YX).